The chain runs to 158 residues: Placenta growth factor (158 aa).

An N-terminal signal peptide occupies residues 1–18 (MLVMKLFTCFLQVLAGLA). Asn29 and Asn30 each carry an N-linked (GlcNAc...) asparagine glycan. Intrachain disulfides connect Cys48–Cys90, Cys79–Cys125, and Cys83–Cys127. Asn97 carries an N-linked (GlcNAc...) asparagine glycan. The tract at residues 136–158 (AERRKTKGKRKRSRNSQTEEPHP) is disordered. Positions 137–149 (ERRKTKGKRKRSR) are enriched in basic residues.

This sequence belongs to the PDGF/VEGF growth factor family. In terms of assembly, antiparallel homodimer; disulfide-linked. Also found as heterodimer with VEGFA/VEGF.

It is found in the secreted. Growth factor active in angiogenesis and endothelial cell growth, stimulating their proliferation and migration. It binds to the receptor FLT1/VEGFR-1. Also promotes cell tumor growth. This chain is Placenta growth factor (Pgf), found in Mus musculus (Mouse).